The sequence spans 1093 residues: Isoleucine--tRNA ligase, chloroplastic/mitochondrial (1093 aa).

Residues 69 to 103 form a disordered region; it reads PNNEFGHSSKRRSRGPVMAAKKASEGEKQEDGKYK. Residues 90-103 are compositionally biased toward basic and acidic residues; sequence KASEGEKQEDGKYK. The 'HIGH' region motif lies at 155–165; that stretch reads PYANGDLHMGH. Glu-682 contributes to the L-isoleucyl-5'-AMP binding site. The short motif at 723-727 is the 'KMSKS' region element; the sequence is KMSKS. ATP is bound at residue Lys-726. Zn(2+)-binding residues include Cys-1050, Cys-1053, Cys-1070, and Cys-1073.

Belongs to the class-I aminoacyl-tRNA synthetase family.

The protein resides in the plastid. It localises to the chloroplast. It is found in the mitochondrion. It carries out the reaction tRNA(Ile) + L-isoleucine + ATP = L-isoleucyl-tRNA(Ile) + AMP + diphosphate. In Arabidopsis thaliana (Mouse-ear cress), this protein is Isoleucine--tRNA ligase, chloroplastic/mitochondrial.